Consider the following 1483-residue polypeptide: MILRRLLLAGSLLLASLAAAKKEGPKITATKFDHEPRHLFYFEDTDTVVFQHKYDAHISTDAGQSWSVIKGPDDGMVGKVKSIYPHPHDRKKAYVFGQSRTHWVTEDAGKSWRAFKIEQDIPRSGNPLAFHGTDSDKLILHTIDCSGFVCDMPALYTTDGFKSHKTLTKSQHGCNWAITTPEFGTQADLPEKIDNRVFCIFSGLHAPMGRNKRLLYSDNFFEDDKGFEVPLNNGRPVSDVVRLAGVKKFLVAAAKSPRTTEMTLYVTDDATRWHQAMFDGHKLENDAYTVLESTNYSIQVGVKTTGGFNPMSALYTSNSEGIYFTRNAEHVNSNHLGYIDFEKIAGIQGIFLINTVSNWEEIDNNHQRKKKVVSQISFDDGRTFHDIKAGDKKLHLHSVAQLHNSGRVFSSPAPGVVMGVGNVGDHLKEYDEGDLYVSNDAGITWSKALEDAHKYEFGDLGSVLVAVYDEGRTNKVSYSIDHGKHWETAELPHKIRARVLTTTPDSTSLKFVLIGTSKSGSGVEHSVIGIDFSNLHERKCGKDDFERWPARLNEKNEPDCLMGHKQFYSRRKAGSECFIGSEFKDPVPELERCKCTEEDFECDFNFVRSKDRKDCVPARALPVPEGQCKKPDDKYTGSSGFRLIPGNDCVKDGGIELDKPKERPCSDAAKEPVSGEIDVTKHFFSANKPAEYYYLERPVLSKDKDETIVMLTDKLEVFITRDHGKTWKETLEGKHVVKLWPHTYINDAMYFITGEKRVIVTKNRGDSFREFETKLLPNRDRLPVLAFHPDPERSDWLIWTGADNCGRGGDCHSVAHYSTDGGDEWHTLMRYVGRCEFIGKERSRKTDELIFCAQHENENPKNRHLRLVSSDSWFKDKTVHYNNILDFRTMAEFIIVAARSEKDSLKVGASIDGKTFADAEFPANFDVKVQQAYTVLDSSTHSVWLHVTVHNVEDHQYGSIIKSNSNGTSYVLSLNNVNRNNADYVDFEKMEGLEGVALVNVVANVDEVQKGAAKQLRTMITHNDGAEWAYIRPPAKDADGRAYSCSPGKKGTEECGLHLHSFTERPDYRDTFSSPSAVGLMLAVGNVGDHLTLKSEGDTFITRDGGIEWHSVKKGNYIWEYGDQGSIIVIVPEAKPTKALFYTLDEGKTWTEFAFSEVEMLILDISTVPSDTSRNFLLWGKEVGSGSKPGFATVNIDFSGLKERSKECVLKEDKPEADDYYLWEPKHPLLEDNCLFGHITRYHRKKPEASCYNGGDFERLHNVSTNCECTRQDYECDYNFERQSDGSCALVPGHQPLDPKRICTEDSKAIEYFEPTGYRRIPLTTCEGGLKLDGFKAFPCPNKEKEFEKKHPRLHGAGLFFAIVLPIAAAGVVGYYVYTRWDGKFGRIRLGESGSSGDWLSRDSPLIAIPIAIIAGTVAVLSALPLLAASLWRSARGWTPIGRSSRPYSSRGAFAARRGDYVGVVEDEDELLGAEDFEEDEEV.

An N-terminal signal peptide occupies residues 1–20 (MILRRLLLAGSLLLASLAAA). The Lumenal portion of the chain corresponds to 21–1356 (KKEGPKITAT…FEKKHPRLHG (1336 aa)). 2 BNR repeats span residues 58–67 (ISTDAGQSWS) and 103–113 (WVTEDAGKSWR). Residue asparagine 295 is glycosylated (N-linked (GlcNAc...) asparagine). BNR repeat units lie at residues 375-385 (QISFDDGRTFH), 436-447 (YVSNDAGITWSK), 478-487 (YSIDHGKHWE), 718-728 (FITRDHGKTWK), and 817-826 (YSTDGGDEWH). Asparagine 966 is a glycosylation site (N-linked (GlcNAc...) asparagine). BNR repeat units lie at residues 1100–1110 (FITRDGGIEWH) and 1141–1151 (FYTLDEGKTWT). N-linked (GlcNAc...) asparagine glycosylation occurs at asparagine 1262. The chain crosses the membrane as a helical span at residues 1357–1377 (AGLFFAIVLPIAAAGVVGYYV). The Cytoplasmic portion of the chain corresponds to 1378 to 1405 (YTRWDGKFGRIRLGESGSSGDWLSRDSP). A helical transmembrane segment spans residues 1406-1426 (LIAIPIAIIAGTVAVLSALPL). Residues 1427-1483 (LAASLWRSARGWTPIGRSSRPYSSRGAFAARRGDYVGVVEDEDELLGAEDFEEDEEV) lie on the Lumenal side of the membrane.

This sequence belongs to the VPS10-related sortilin family.

Its subcellular location is the golgi apparatus. It is found in the trans-Golgi network membrane. It localises to the prevacuolar compartment membrane. Functions as a sorting receptor in the Golgi compartment required for the intracellular sorting and delivery of soluble vacuolar proteins, like carboxypeptidase Y (CPY) and proteinase A. Executes multiple rounds of sorting by cycling between the late Golgi and a prevacuolar endosome-like compartment. The sequence is that of Vacuolar protein sorting/targeting protein 10 (VPS10) from Uncinocarpus reesii (strain UAMH 1704).